The sequence spans 1305 residues: MVITVQGADLVRRALNRLFKYGRIDGTKMYYEYYRYSSKMRETRRKKGTKYKTDDEFLERERDAGRLKLYDLQVIREASWEDLLYENVHTAELDIYVRSILKLEDLEPEEEFLRNYAVYDGVHPLKDFVEMRAKNEMQIFGDMPIKAWISVLMEISRETKHKPLGLMVASDFVGRFGSPFEQNFRDLSQINEYGYCYSSPLLFEMCVTESILEFNMWYRMREERIQSLKFGLEVIDPFKLIREFFEICLPHPKKINNTLRSPYSWFVKNWGIGCSRVKVLTSIGGEDRNSKEVFYTGYHETENLYSEIVLKSKFYRESLKQNMTKTEEAITYSQKLGNHGRTMPIFLKMLKAVYTTEFDPTKISHVILASLCLSIQTITGYGRAWVVNKSSDLEAQMKPSSDNYVQRVCDYTKNNFIKAYEEARRGGEEIVMPEDMYTSILRLAKNTSSGFSTSIDVFKRYGPNAKGGRGEKIQITSRIKALVIFTKGHEIFTPKNLALKYNTTEFFQTKGSRDVPIKSTRIVYSINLSILVPQLIVTLPLNEYFARAGGSTLPETQRMGGKIIVGDLEATGSRVMDAADTFRNSSDPLNLTIAIDYSEFDTHLTPYNFRNGMLDGIREAMRRYQHLRYEGYTLDELIEFGYGEGRVMNTLWNGKRRVFKVAFEDYVMLSDEDKVQGTFKPPIGVKPVKNIKICEELEKKADGRDLILVSPTDGSDLALINTHLSGENSTLIANSLHNLAIGTVIREEVKRIFGDDISFKSEQYVGDDTLFYTELRTRSVERFDSIVDTIFEVIKKSGHEASMSKTLIAPFSVEKTQTHAKQGIYIPQDRMMLVSSERRKDIEDVAGYLRSQVQTLTTKISRGFSHELAQIIFMMKSSIIGHRKLKRTIKDGGYRDRKYDDDKEDGFTLIMLRDPLIAFYPVEWNGFGAHPAAMNIIMTEDMFVDSVMRGECRAWMEPLVKLIDQSPPLWNETSADKRMIGTDSTMSFFSRMARPAVRTVLTNSEVGDAVRSLPLGDFSPFNISKTMMHSALLKEKNARSLLTPAYEMEYQKELQGWRPRQKKFLVTSNEMEITTNYMKMFNVGKIPLHGLALKFFPDVNLSKEFFLQKSVLGNRESPRARMSYVDRIDSILRGDVVMRGFITANTIINILEKLGHTHSASDLTTLFEIMNLSSSVAQRLSEYITTERVRFDAMKLSKRGICGDEFSMSLDVCTQTMVDRYIRAPTQFTKTELDAVNLYVAQHIMLDAATGLTPSRYDINVSGDERVRFKQRVARFNTHLPKMRMVKRLIETERLSARLVQNQFV.

The RdRp catalytic domain occupies 563–814; the sequence is IIVGDLEATG…KTLIAPFSVE (252 aa).

It belongs to the reoviridae RNA-directed RNA polymerase family.

It carries out the reaction RNA(n) + a ribonucleoside 5'-triphosphate = RNA(n+1) + diphosphate. This is RNA-directed RNA polymerase (Segment-1) from African horse sickness virus (AHSV).